The chain runs to 634 residues: Kinesin-like protein KIF22 (634 aa).

The 327-residue stretch at 19 to 345 folds into the Kinesin motor domain; sequence RVRVAVRLRP…LNFAAKSKQI (327 aa). 103–110 lines the ATP pocket; that stretch reads GPTGAGKT. The segment at 357–406 is disordered; it reads APTIAPGKRTREEQEAGGSGEPQNKRSKEGKKAEHSPSPPLHPQSSPDSS. Basic and acidic residues predominate over residues 379–391; the sequence is QNKRSKEGKKAEH. Positions 421–471 form a coiled coil; it reads SAERERLNLLKTVAQSRKEIQMLKEKQKELEDKANMFNKQKETTEKESKDA.

Belongs to the TRAFAC class myosin-kinesin ATPase superfamily. Kinesin family. Post-translationally, ubiquitinated, leading to its subsequent proteasomal degradation.

Its subcellular location is the nucleus. The protein localises to the cytoplasm. It is found in the cytoskeleton. Functionally, kinesin family member that is involved in spindle formation and the movements of chromosomes during mitosis and meiosis. Binds to microtubules and to DNA. The polypeptide is Kinesin-like protein KIF22 (kif22) (Danio rerio (Zebrafish)).